Consider the following 654-residue polypeptide: Fructose-1,6-bisphosphatase class 3 (654 aa).

The tract at residues 288–307 (NPAFKPKKRPDKHERLTQRE) is disordered. Residues 298–307 (DKHERLTQRE) show a composition bias toward basic and acidic residues.

The protein belongs to the FBPase class 3 family. The cofactor is Mn(2+).

It catalyses the reaction beta-D-fructose 1,6-bisphosphate + H2O = beta-D-fructose 6-phosphate + phosphate. It functions in the pathway carbohydrate biosynthesis; gluconeogenesis. This chain is Fructose-1,6-bisphosphatase class 3, found in Staphylococcus aureus (strain USA300).